The primary structure comprises 238 residues: Ribonuclease PH (238 aa).

Residues R86 and 124 to 126 each bind phosphate; that span reads GTR.

It belongs to the RNase PH family. As to quaternary structure, homohexameric ring arranged as a trimer of dimers.

It catalyses the reaction tRNA(n+1) + phosphate = tRNA(n) + a ribonucleoside 5'-diphosphate. Functionally, phosphorolytic 3'-5' exoribonuclease that plays an important role in tRNA 3'-end maturation. Removes nucleotide residues following the 3'-CCA terminus of tRNAs; can also add nucleotides to the ends of RNA molecules by using nucleoside diphosphates as substrates, but this may not be physiologically important. Probably plays a role in initiation of 16S rRNA degradation (leading to ribosome degradation) during starvation. The polypeptide is Ribonuclease PH (Histophilus somni (strain 2336) (Haemophilus somnus)).